Reading from the N-terminus, the 415-residue chain is Gamma-glutamyl phosphate reductase (415 aa).

The protein belongs to the gamma-glutamyl phosphate reductase family.

Its subcellular location is the cytoplasm. The enzyme catalyses L-glutamate 5-semialdehyde + phosphate + NADP(+) = L-glutamyl 5-phosphate + NADPH + H(+). The protein operates within amino-acid biosynthesis; L-proline biosynthesis; L-glutamate 5-semialdehyde from L-glutamate: step 2/2. In terms of biological role, catalyzes the NADPH-dependent reduction of L-glutamate 5-phosphate into L-glutamate 5-semialdehyde and phosphate. The product spontaneously undergoes cyclization to form 1-pyrroline-5-carboxylate. The protein is Gamma-glutamyl phosphate reductase of Bacillus cereus (strain AH187).